Consider the following 952-residue polypeptide: MNNWKRFTFFDIETVKQVEKEDGSSLQKLSITCTTSGRGSLIIGDAEGFINFVDREFGISSFQAYQQSVSLIYQLKERNFLSSVGHDDIGGAAILKIWNLDKTDKNEQPICVRSIKLEKSVTVTCFTLLEDLSQIIVGLANGEIIIIRADIFRDKVIKQKIIKVPNDSPITGLGFFPTKSQQSASAGAVLFVVTTTHVITYHTAHKDQETIIDDEGGDIGSFLMSDDGSPIIARSDAIYFYNVDGRGPCFGFTGVKTKVLWFRSYLVVIGYDTNNTNALFPGAVVGGQNSIGGLGSQTGSIGSPSVMVQNTKNNVLNIYDLKNKYIGFTEKFDTVSHICSEWGSIFIFGADGKVFQLEEKDTQTKLETLFKKHSYQVAIDLAKSQHYDNSAIADVYREYGDRLYAKGDYDGAITQYLCTIGQLEPSYVIRKFLDAQRIHNLTSYIQALHEKNLATANHTTLLLNCYTKLKDVKKLDHFIMTDNGTFDVETAIKVCRQGGYFDRALFLASKHSRHDWYLKILLEDLNEYRKALDYIQTLDWEEADKNLKKYGKQLVSEIPEETTGVLMKLCTNYQPVQAFDSLTALNLNGLTISNQTTTTTTVTNVTNNNNQNNNSNNNNQNNNNNNNNNIGFKQKSAPEEFIHIFVSQADWLVKFLEYMVQQGNNESSLIYNTLLELYLRDDVNQTDDERIKRKAKAYEFLTNPKSKFDQDHALILVQVHNWKEGVLYLYEKLELFNEIIEYHMENNDYDGLIKACKRYGVKDPNLWVRALSFFSTNKQDCQDEIIEVLTNIDKENLIPPLLVIQILSQNKNTTLAVIKDYISRRLSQETQQIDKDYTQIRQYADETEKMRHEINELRTNSKIFQQTKCIACLLALDLPSVHFLCQHSFHQRCLGENERECPSCAGANKRIQEIKRSQADSANQHDQFFKLLRSSPDGFTTVSEYFGRGILN.

CHCR repeat units lie at residues tyrosine 416 to threonine 563 and asparagine 629 to aspartate 783. Low complexity predominate over residues asparagine 608–asparagine 629. The tract at residues asparagine 608–phenylalanine 632 is disordered. Residues tyrosine 837–lysine 868 adopt a coiled-coil conformation. An RING-type; atypical zinc finger spans residues cysteine 869–alanine 905.

It belongs to the VPS11 family.

The protein localises to the vacuole membrane. Its function is as follows. May play a role in vesicle-mediated protein trafficking. This is Vacuolar protein sorting-associated protein 11 homolog (vps11) from Dictyostelium discoideum (Social amoeba).